The chain runs to 614 residues: UvrABC system protein C (614 aa).

Positions 14 to 91 constitute a GIY-YIG domain; it reads TSPGCYIHKD…IKENKPKYNI (78 aa). Residues 196–231 form the UVR domain; sequence NKIIDELKGKMAAAAQTMEFERAAEYRDLIQAIGTL. The disordered stretch occupies residues 595-614; sequence LPQVAEERVDYQTEGNHNKP.

The protein belongs to the UvrC family. As to quaternary structure, interacts with UvrB in an incision complex.

The protein localises to the cytoplasm. Functionally, the UvrABC repair system catalyzes the recognition and processing of DNA lesions. UvrC both incises the 5' and 3' sides of the lesion. The N-terminal half is responsible for the 3' incision and the C-terminal half is responsible for the 5' incision. This chain is UvrABC system protein C, found in Streptococcus pneumoniae (strain Taiwan19F-14).